The sequence spans 258 residues: Thiazole synthase (258 aa).

Catalysis depends on Lys100, which acts as the Schiff-base intermediate with DXP. Residues Gly161, 187–188, and 209–210 contribute to the 1-deoxy-D-xylulose 5-phosphate site; these read AG and NT.

Belongs to the ThiG family. In terms of assembly, homotetramer. Forms heterodimers with either ThiH or ThiS.

It localises to the cytoplasm. The enzyme catalyses [ThiS sulfur-carrier protein]-C-terminal-Gly-aminoethanethioate + 2-iminoacetate + 1-deoxy-D-xylulose 5-phosphate = [ThiS sulfur-carrier protein]-C-terminal Gly-Gly + 2-[(2R,5Z)-2-carboxy-4-methylthiazol-5(2H)-ylidene]ethyl phosphate + 2 H2O + H(+). Its pathway is cofactor biosynthesis; thiamine diphosphate biosynthesis. In terms of biological role, catalyzes the rearrangement of 1-deoxy-D-xylulose 5-phosphate (DXP) to produce the thiazole phosphate moiety of thiamine. Sulfur is provided by the thiocarboxylate moiety of the carrier protein ThiS. In vitro, sulfur can be provided by H(2)S. This chain is Thiazole synthase, found in Campylobacter jejuni (strain RM1221).